The sequence spans 155 residues: Protein-export protein SecB (155 aa).

The protein belongs to the SecB family. Homotetramer, a dimer of dimers. One homotetramer interacts with 1 SecA dimer.

The protein resides in the cytoplasm. In terms of biological role, one of the proteins required for the normal export of preproteins out of the cell cytoplasm. It is a molecular chaperone that binds to a subset of precursor proteins, maintaining them in a translocation-competent state. It also specifically binds to its receptor SecA. The chain is Protein-export protein SecB from Salmonella heidelberg (strain SL476).